The chain runs to 327 residues: Mitochondrial coenzyme A transporter SLC25A42 (327 aa).

Solcar repeat units lie at residues 34–120 (KSIL…YKKL), 132–217 (LTPI…LKKL), and 227–315 (PYPF…TQIL). Helical transmembrane passes span 36–56 (ILNSLMSGALAGAVAKTAVAP), 92–112 (LWRGNSATMVRVIPYAAIQFC), 138–158 (LLAGALAGTTATIITYPLDLV), 189–209 (LYRGFTPTVLGVIPYAGISFF), 233–253 (LLFGACAGLFGQSASYPLDVV), and 296–316 (VKGPVAVGISFTTFDLTQILL).

Belongs to the mitochondrial carrier (TC 2.A.29) family.

The protein localises to the mitochondrion inner membrane. The enzyme catalyses ADP(out) + CoA(in) = ADP(in) + CoA(out). It carries out the reaction 3'-dephospho-CoA(in) + ADP(out) = 3'-dephospho-CoA(out) + ADP(in). It catalyses the reaction adenosine 3',5'-bisphosphate(in) + ADP(out) = adenosine 3',5'-bisphosphate(out) + ADP(in). The catalysed reaction is AMP(in) + ADP(out) = AMP(out) + ADP(in). The enzyme catalyses dADP(in) + ADP(out) = dADP(out) + ADP(in). It carries out the reaction ADP(in) + ATP(out) = ADP(out) + ATP(in). In terms of biological role, mitochondrial carrier mediating the transport of coenzyme A (CoA) in mitochondria in exchange for intramitochondrial (deoxy)adenine nucleotides and adenosine 3',5'-diphosphate. This is Mitochondrial coenzyme A transporter SLC25A42 (slc25a42) from Xenopus tropicalis (Western clawed frog).